We begin with the raw amino-acid sequence, 578 residues long: 2-succinyl-5-enolpyruvyl-6-hydroxy-3-cyclohexene-1-carboxylate synthase (578 aa).

A disordered region spans residues 186–208 (LPAAGGEHHPAEPRSTPWDGPVP).

It belongs to the TPP enzyme family. MenD subfamily. Homodimer. It depends on Mg(2+) as a cofactor. The cofactor is Mn(2+). Thiamine diphosphate serves as cofactor.

It catalyses the reaction isochorismate + 2-oxoglutarate + H(+) = 5-enolpyruvoyl-6-hydroxy-2-succinyl-cyclohex-3-ene-1-carboxylate + CO2. The protein operates within quinol/quinone metabolism; 1,4-dihydroxy-2-naphthoate biosynthesis; 1,4-dihydroxy-2-naphthoate from chorismate: step 2/7. It functions in the pathway cofactor biosynthesis; phylloquinone biosynthesis. In terms of biological role, catalyzes the thiamine diphosphate-dependent decarboxylation of 2-oxoglutarate and the subsequent addition of the resulting succinic semialdehyde-thiamine pyrophosphate anion to isochorismate to yield 2-succinyl-5-enolpyruvyl-6-hydroxy-3-cyclohexene-1-carboxylate (SEPHCHC). This is 2-succinyl-5-enolpyruvyl-6-hydroxy-3-cyclohexene-1-carboxylate synthase from Synechococcus sp. (strain WH7803).